A 425-amino-acid polypeptide reads, in one-letter code: tRNA(Ile)-lysidine synthase (425 aa).

27 to 32 contributes to the ATP binding site; the sequence is SGGLDS.

This sequence belongs to the tRNA(Ile)-lysidine synthase family.

It localises to the cytoplasm. It catalyses the reaction cytidine(34) in tRNA(Ile2) + L-lysine + ATP = lysidine(34) in tRNA(Ile2) + AMP + diphosphate + H(+). Ligates lysine onto the cytidine present at position 34 of the AUA codon-specific tRNA(Ile) that contains the anticodon CAU, in an ATP-dependent manner. Cytidine is converted to lysidine, thus changing the amino acid specificity of the tRNA from methionine to isoleucine. This is tRNA(Ile)-lysidine synthase from Streptococcus pneumoniae serotype 19F (strain G54).